Consider the following 462-residue polypeptide: Siroheme synthase (462 aa).

Positions 1–201 (MQFLPLFHKL…GKPEEGERLL (201 aa)) are precorrin-2 dehydrogenase /sirohydrochlorin ferrochelatase. Residues 22–23 (EV) and 43–44 (PE) each bind NAD(+). Ser126 bears the Phosphoserine mark. The interval 214-462 (GEVYLVGAGP…AWFEGAQGSL (249 aa)) is uroporphyrinogen-III C-methyltransferase. Pro223 contacts S-adenosyl-L-methionine. Residue Asp246 is the Proton acceptor of the active site. Lys268 serves as the catalytic Proton donor. S-adenosyl-L-methionine contacts are provided by residues 299–301 (GGD), Ile304, 329–330 (TA), Met381, and Gly410.

It in the N-terminal section; belongs to the precorrin-2 dehydrogenase / sirohydrochlorin ferrochelatase family. The protein in the C-terminal section; belongs to the precorrin methyltransferase family.

The catalysed reaction is uroporphyrinogen III + 2 S-adenosyl-L-methionine = precorrin-2 + 2 S-adenosyl-L-homocysteine + H(+). It catalyses the reaction precorrin-2 + NAD(+) = sirohydrochlorin + NADH + 2 H(+). It carries out the reaction siroheme + 2 H(+) = sirohydrochlorin + Fe(2+). It functions in the pathway cofactor biosynthesis; adenosylcobalamin biosynthesis; precorrin-2 from uroporphyrinogen III: step 1/1. It participates in cofactor biosynthesis; adenosylcobalamin biosynthesis; sirohydrochlorin from precorrin-2: step 1/1. Its pathway is porphyrin-containing compound metabolism; siroheme biosynthesis; precorrin-2 from uroporphyrinogen III: step 1/1. The protein operates within porphyrin-containing compound metabolism; siroheme biosynthesis; siroheme from sirohydrochlorin: step 1/1. It functions in the pathway porphyrin-containing compound metabolism; siroheme biosynthesis; sirohydrochlorin from precorrin-2: step 1/1. In terms of biological role, multifunctional enzyme that catalyzes the SAM-dependent methylations of uroporphyrinogen III at position C-2 and C-7 to form precorrin-2 via precorrin-1. Then it catalyzes the NAD-dependent ring dehydrogenation of precorrin-2 to yield sirohydrochlorin. Finally, it catalyzes the ferrochelation of sirohydrochlorin to yield siroheme. The sequence is that of Siroheme synthase from Ectopseudomonas mendocina (strain ymp) (Pseudomonas mendocina).